The following is a 122-amino-acid chain: Ribonuclease pancreatic (122 aa).

Substrate is bound by residues Lys-6 and Arg-9. His-11 (proton acceptor) is an active-site residue. Disulfide bonds link Cys-25/Cys-83, Cys-39/Cys-94, Cys-57/Cys-109, and Cys-64/Cys-71. Substrate contacts are provided by residues Lys-40–Thr-44, Lys-65, and Arg-84. His-117 serves as the catalytic Proton donor.

This sequence belongs to the pancreatic ribonuclease family. As to quaternary structure, monomer. Interacts with and forms tight 1:1 complexes with RNH1. Dimerization of two such complexes may occur. Interaction with RNH1 inhibits this protein. Pancreas.

It localises to the secreted. It catalyses the reaction an [RNA] containing cytidine + H2O = an [RNA]-3'-cytidine-3'-phosphate + a 5'-hydroxy-ribonucleotide-3'-[RNA].. The enzyme catalyses an [RNA] containing uridine + H2O = an [RNA]-3'-uridine-3'-phosphate + a 5'-hydroxy-ribonucleotide-3'-[RNA].. Its function is as follows. Endonuclease that catalyzes the cleavage of RNA on the 3' side of pyrimidine nucleotides. Acts on single-stranded and double-stranded RNA. This is Ribonuclease pancreatic from Notamacropus rufogriseus (Red-necked wallaby).